A 166-amino-acid polypeptide reads, in one-letter code: Phospholipase A2 inhibitor clone 08 (166 aa).

The signal sequence occupies residues 1–19 (MRLILLSSLLLLGIFLANG). The region spanning 46 to 161 (LKGAFLTVHR…CDDNLLVVCE (116 aa)) is the C-type lectin domain. Disulfide bonds link cysteine 83–cysteine 160 and cysteine 138–cysteine 152. Asparagine 122 carries N-linked (GlcNAc...) asparagine glycosylation.

This sequence belongs to the alpha-type phospholipase A2 inhibitor family. In terms of assembly, homotrimer; non-covalently linked. Expressed by the liver.

It is found in the secreted. Its function is as follows. This phospholipase A2 inhibitor binds directly phospholipase A2 in the presence or absence of calcium. This Bothrops moojeni (Lance-headed viper) protein is Phospholipase A2 inhibitor clone 08.